A 387-amino-acid polypeptide reads, in one-letter code: Succinyl-diaminopimelate desuccinylase (387 aa).

H73 lines the Zn(2+) pocket. D75 is a catalytic residue. Zn(2+) is bound at residue D106. The Proton acceptor role is filled by E141. Zn(2+) contacts are provided by E142, E170, and H359.

The protein belongs to the peptidase M20A family. DapE subfamily. In terms of assembly, homodimer. Requires Zn(2+) as cofactor. Co(2+) serves as cofactor.

The enzyme catalyses N-succinyl-(2S,6S)-2,6-diaminopimelate + H2O = (2S,6S)-2,6-diaminopimelate + succinate. The protein operates within amino-acid biosynthesis; L-lysine biosynthesis via DAP pathway; LL-2,6-diaminopimelate from (S)-tetrahydrodipicolinate (succinylase route): step 3/3. In terms of biological role, catalyzes the hydrolysis of N-succinyl-L,L-diaminopimelic acid (SDAP), forming succinate and LL-2,6-diaminopimelate (DAP), an intermediate involved in the bacterial biosynthesis of lysine and meso-diaminopimelic acid, an essential component of bacterial cell walls. The polypeptide is Succinyl-diaminopimelate desuccinylase (Methylorubrum populi (strain ATCC BAA-705 / NCIMB 13946 / BJ001) (Methylobacterium populi)).